The primary structure comprises 170 residues: Small ribosomal subunit protein mS41 (170 aa).

Residues M1–S20 constitute a mitochondrion transit peptide.

It belongs to the mitochondrion-specific ribosomal protein mS41 family. Component of the mitochondrial small ribosomal subunit (mt-SSU).

The protein resides in the mitochondrion. Component of the mitochondrial ribosome (mitoribosome), a dedicated translation machinery responsible for the synthesis of mitochondrial genome-encoded proteins, including at least some of the essential transmembrane subunits of the mitochondrial respiratory chain. The mitoribosomes are attached to the mitochondrial inner membrane and translation products are cotranslationally integrated into the membrane. mS41 is involved in telomere length regulation. The chain is Small ribosomal subunit protein mS41 (FYV4) from Candida albicans (strain SC5314 / ATCC MYA-2876) (Yeast).